Reading from the N-terminus, the 583-residue chain is Isocitrate dehydrogenase kinase/phosphatase (583 aa).

ATP-binding positions include 315-321 (APGIRGM) and lysine 336. The active site involves aspartate 371.

It belongs to the AceK family.

The protein resides in the cytoplasm. It carries out the reaction L-seryl-[isocitrate dehydrogenase] + ATP = O-phospho-L-seryl-[isocitrate dehydrogenase] + ADP + H(+). In terms of biological role, bifunctional enzyme which can phosphorylate or dephosphorylate isocitrate dehydrogenase (IDH) on a specific serine residue. This is a regulatory mechanism which enables bacteria to bypass the Krebs cycle via the glyoxylate shunt in response to the source of carbon. When bacteria are grown on glucose, IDH is fully active and unphosphorylated, but when grown on acetate or ethanol, the activity of IDH declines drastically concomitant with its phosphorylation. The chain is Isocitrate dehydrogenase kinase/phosphatase from Salmonella heidelberg (strain SL476).